We begin with the raw amino-acid sequence, 129 residues long: Phosphoribosyl-AMP cyclohydrolase (129 aa).

Aspartate 86 contributes to the Mg(2+) binding site. Cysteine 87 provides a ligand contact to Zn(2+). Mg(2+) is bound by residues aspartate 88 and aspartate 90. Residues cysteine 104 and cysteine 111 each contribute to the Zn(2+) site.

The protein belongs to the PRA-CH family. As to quaternary structure, homodimer. Mg(2+) serves as cofactor. The cofactor is Zn(2+).

Its subcellular location is the cytoplasm. The catalysed reaction is 1-(5-phospho-beta-D-ribosyl)-5'-AMP + H2O = 1-(5-phospho-beta-D-ribosyl)-5-[(5-phospho-beta-D-ribosylamino)methylideneamino]imidazole-4-carboxamide. The protein operates within amino-acid biosynthesis; L-histidine biosynthesis; L-histidine from 5-phospho-alpha-D-ribose 1-diphosphate: step 3/9. Its function is as follows. Catalyzes the hydrolysis of the adenine ring of phosphoribosyl-AMP. This Ignicoccus hospitalis (strain KIN4/I / DSM 18386 / JCM 14125) protein is Phosphoribosyl-AMP cyclohydrolase.